A 193-amino-acid chain; its full sequence is MSDNYTPRLKAQYREEIREKLQAEFNFDNVMQIPGVTKVVVNMGVGDAARDSKMINGAIADLTAITGQKPQVRTAKKAIANFKLREGMPIGARVTLRGDRMWEFLDRLLTIALPRIRDFRGLSDRQFDGHGNYTFGLSEQTMFYEIDVDKMDRPRGMNITVVTTATNDEEGRALLRRLGFPFKDKDGKMQQAD.

This sequence belongs to the universal ribosomal protein uL5 family. In terms of assembly, part of the 50S ribosomal subunit; part of the 5S rRNA/L5/L18/L25 subcomplex. Contacts the 5S rRNA and the P site tRNA. Forms a bridge to the 30S subunit in the 70S ribosome.

This is one of the proteins that bind and probably mediate the attachment of the 5S RNA into the large ribosomal subunit, where it forms part of the central protuberance. In the 70S ribosome it contacts protein S13 of the 30S subunit (bridge B1b), connecting the 2 subunits; this bridge is implicated in subunit movement. Contacts the P site tRNA; the 5S rRNA and some of its associated proteins might help stabilize positioning of ribosome-bound tRNAs. The chain is Large ribosomal subunit protein uL5 from Corynebacterium urealyticum (strain ATCC 43042 / DSM 7109).